Consider the following 170-residue polypeptide: Interferon gamma (170 aa).

The signal sequence occupies residues 1–20 (MNSRLCIMALLLCFSQALLG). 2 N-linked (GlcNAc...) asparagine glycosylation sites follow: asparagine 36 and asparagine 103.

Belongs to the type II (or gamma) interferon family. Homodimer. Interacts with IFNGR1 (via extracellular domain); this interaction promotes IFNGR1 dimerization. As to expression, released primarily from activated T lymphocytes.

Its subcellular location is the secreted. Functionally, type II interferon produced by immune cells such as T-cells and NK cells that plays crucial roles in antimicrobial, antiviral, and antitumor responses by activating effector immune cells and enhancing antigen presentation. Primarily signals through the JAK-STAT pathway after interaction with its receptor IFNGR1 to affect gene regulation. Upon IFNG binding, IFNGR1 intracellular domain opens out to allow association of downstream signaling components JAK2, JAK1 and STAT1, leading to STAT1 activation, nuclear translocation and transcription of IFNG-regulated genes. Many of the induced genes are transcription factors such as IRF1 that are able to further drive regulation of a next wave of transcription. Plays a role in class I antigen presentation pathway by inducing a replacement of catalytic proteasome subunits with immunoproteasome subunits. In turn, increases the quantity, quality, and repertoire of peptides for class I MHC loading. Increases the efficiency of peptide generation also by inducing the expression of activator PA28 that associates with the proteasome and alters its proteolytic cleavage preference. Up-regulates as well MHC II complexes on the cell surface by promoting expression of several key molecules such as cathepsins B/CTSB, H/CTSH, and L/CTSL. Participates in the regulation of hematopoietic stem cells during development and under homeostatic conditions by affecting their development, quiescence, and differentiation. This Sigmodon hispidus (Hispid cotton rat) protein is Interferon gamma (IFNG).